Consider the following 251-residue polypeptide: Chloride intracellular channel protein 5 (251 aa).

Residues Met-1–Pro-98 are required for insertion into the membrane. A G-site motif is present at residues Cys-32 to Ser-35. Residues Phe-34 to Val-54 traverse the membrane as a helical segment. The 141-residue stretch at Tyr-101–Tyr-241 folds into the GST C-terminal domain.

This sequence belongs to the chloride channel CLIC family. In terms of assembly, component of a multimeric complex consisting of several cytoskeletal proteins, including actin, ezrin, alpha-actinin, gelsolin, and IQGAP1. Interacts with AKAP9. Interacts with TPRN. TPRN, CLIC5 and PTPQR form concentric rings at the base of stereocilia and may form a complex. Interacts with EZR, MYO6 and RDX; the proteins may work together as a complex to stabilize linkages between the plasma membrane and subjacent actin cytoskeleton at the stereocilium base. Detected in lung and inner ear. Detected in embryonic cochlea, on microvilli-covered apical surfaces of interdental cells, columnar cells of Kolliker's organ, and on stereocilia of inner and outer hair cells (at protein level). Also detected in the eye, where it localizes to lens fiber cells in the lens epithelium (at protein level).

It is found in the golgi apparatus. It localises to the cytoplasm. The protein localises to the cytoskeleton. The protein resides in the microtubule organizing center. Its subcellular location is the centrosome. It is found in the cell cortex. It localises to the membrane. The protein localises to the apical cell membrane. The protein resides in the mitochondrion. Its subcellular location is the cell projection. It is found in the stereocilium. The enzyme catalyses Na(+)(in) = Na(+)(out). It catalyses the reaction K(+)(in) = K(+)(out). It carries out the reaction chloride(in) = chloride(out). Inhibited by F-actin. Its function is as follows. In the soluble state, catalyzes glutaredoxin-like thiol disulfide exchange reactions with reduced glutathione as electron donor. Can insert into membranes and form non-selective ion channels almost equally permeable to Na(+), K(+) and Cl(-). Required for normal hearing. Necessary for the formation of stereocilia in the inner ear and normal development of the organ of Corti. Required for the proper localization of PTPRQ and RDX to the stereocilium base during postnatal maturation of hair bundles. Can insert into membranes and form poorly selective ion channels that may also transport chloride ions. Required for the development and/or maintenance of the proper glomerular endothelial cell and podocyte architecture. Plays a role in formation of the lens suture in the eye, which is important for normal optical properties of the lens. In Mus musculus (Mouse), this protein is Chloride intracellular channel protein 5 (Clic5).